The sequence spans 1075 residues: MLRNGNEGMSTIPGFSQIQFEGFCRFINQGLAEELEKFPTIKDPDHEIAFQLFAKGYQLLEPSIKERNAVYESLTYSSELYVSARLIFGFDVQKQTISIGNIPIMNSLGTFIINGIYRIVINQILLSPGIYYRSELDHKGISIYTGTIISDWGGRSELAIDKKERIWARVSRKQKISILVLSSAMGSNLREILDNVSYPEIFLSFPNAKEKKRIESKEKAILEFYQQFACVGGDLVFSESLCEELQKKFFQQKCELGRVGRRNMNRRLNLDIPQNNTFLLPRDVLAATDHLIGMKFGTGILDDDDMNHLKNKRIRSVADLLQDQFGLALGRLQHAVQKTIRRVFIRQSKPTPQTLVTPTSTSILLITTYETFFGTYPLAQVFDQTNPLTQTVHGRKVSCLGPGGLTGRTASFRSRDIHPSHYGRICPIDTSEGINVGLTGSLAIHARIDHWWGSIESPFYEISEKAKEKKERQVVYLSPNRDEYYMIAAGNSLSLNQGIQEEQVVPARYRQEFLTIAWEQIHVRSIFPFQYFSIGGSLIPFIEHNDANRALMSSNMQRQAVPLSRSEKCIVGTGLERQTALDSRVSVIAEREGKIISSDSHKILLSSSGKTISIPLVAHRRSNKNTCMHQKPRVPRGKSIKKGQILAEGAATVGGELALGKNVLVAYMPWEGYNFEDAVLISERLVYEDIYTSFHIRKYEIQTDTTSQGSAEKITKQIPHLEEHLLRNLDRNGVVRLGSWVETGDILVGKLTPQIASESSYIAEAGLLRAIFGLEVSTSKETSLKLPIGGRGRVIDVKWIQRDPFDIMVRVYILQKREIKVGDKVAGRHGNKGIISKILPRQDMPYLQDGTPVDMVFNPLGVPSRMNVGQIFESSLGLAGDLLKKHYRIAPFDERYEQEASRKLVFSELYEASKQTKNPWVFEPEYPGKSRIFDGRTGDPFEQPVLIGKSYILKLIHQVDEKIHGRSTGPYSLVTQQPVRGRAKQGGQRIGEMEVWALEGFGVAHILQEILTYKSDHLIARQEILNATIWGKRVPNHEDPPESFRVLVRELRSLALELNHFLVSEKNFRVNREDV.

This sequence belongs to the RNA polymerase beta chain family. In plastids the minimal PEP RNA polymerase catalytic core is composed of four subunits: alpha, beta, beta', and beta''. When a (nuclear-encoded) sigma factor is associated with the core the holoenzyme is formed, which can initiate transcription.

Its subcellular location is the plastid. The protein resides in the chloroplast. It catalyses the reaction RNA(n) + a ribonucleoside 5'-triphosphate = RNA(n+1) + diphosphate. Functionally, DNA-dependent RNA polymerase catalyzes the transcription of DNA into RNA using the four ribonucleoside triphosphates as substrates. This is DNA-directed RNA polymerase subunit beta from Sorghum bicolor (Sorghum).